The following is a 101-amino-acid chain: Urease subunit beta (101 aa).

The protein belongs to the urease beta subunit family. In terms of assembly, heterotrimer of UreA (gamma), UreB (beta) and UreC (alpha) subunits. Three heterotrimers associate to form the active enzyme.

Its subcellular location is the cytoplasm. It catalyses the reaction urea + 2 H2O + H(+) = hydrogencarbonate + 2 NH4(+). It participates in nitrogen metabolism; urea degradation; CO(2) and NH(3) from urea (urease route): step 1/1. The protein is Urease subunit beta of Polaromonas naphthalenivorans (strain CJ2).